A 108-amino-acid chain; its full sequence is Large ribosomal subunit protein uL11 (108 aa).

Belongs to the universal ribosomal protein uL11 family. As to quaternary structure, part of the ribosomal stalk of the 50S ribosomal subunit. Interacts with L10 and the large rRNA to form the base of the stalk. L10 forms an elongated spine to which L12 dimers bind in a sequential fashion forming a multimeric L10(L12)X complex.

Its function is as follows. Forms part of the ribosomal stalk which helps the ribosome interact with GTP-bound translation factors. The sequence is that of Large ribosomal subunit protein uL11 (rpl11) from Aeropyrum pernix (strain ATCC 700893 / DSM 11879 / JCM 9820 / NBRC 100138 / K1).